Here is a 395-residue protein sequence, read N- to C-terminus: Putative nickel insertion protein (395 aa).

This sequence belongs to the LarC family.

In Methanopyrus kandleri (strain AV19 / DSM 6324 / JCM 9639 / NBRC 100938), this protein is Putative nickel insertion protein.